A 112-amino-acid chain; its full sequence is Putative pterin-4-alpha-carbinolamine dehydratase (112 aa).

Belongs to the pterin-4-alpha-carbinolamine dehydratase family.

It carries out the reaction (4aS,6R)-4a-hydroxy-L-erythro-5,6,7,8-tetrahydrobiopterin = (6R)-L-erythro-6,7-dihydrobiopterin + H2O. The chain is Putative pterin-4-alpha-carbinolamine dehydratase from Photobacterium profundum (strain SS9).